The following is a 386-amino-acid chain: Hydrazine synthase subunit beta (386 aa).

The signal sequence occupies residues 1–34 (MVIRRKMNKMIRKGMIGAVMLGAAVAISGGVATA).

Part of the hydrazine synthase complex that forms an elongated dimer of heterotrimers composed of one alpha, one beta and one gamma subunit.

It localises to the anammoxosome. It functions in the pathway nitrogen metabolism. Functionally, component of the hydrazine synthase complex that catalyzes the condensation of nitric oxide (NO) with ammonium to form hydrazine. The beta subunit may play a role in modulating transport of the hydroxylamine intermediate through a tunnel between the gamma and alpha subunit's active site. Is involved in anaerobic ammonium oxidation (anammox), a biological process in which nitrite is used as the electron acceptor in the conversion of ammonium to dinitrogen gas (N2) and water; this bacterial process has a major role in the Earth's nitrogen cycle and has been estimated to synthesize up to 50% of the dinitrogen gas emitted into our atmosphere from the oceans. The chain is Hydrazine synthase subunit beta from Kuenenia stuttgartiensis.